The sequence spans 459 residues: MHILMIGLNYKTAPVEIREKFSFQDSELPQALHQLRQMKSILECTIVSTCNRTELYVVADQLHTGRHFTKTFLADWFKLPKDEFTPFLTIRENDHAIEHLFRVVTGLDSMILGETQILGQVRNSFFIAQEEQVTGSIFNHLFKQAITLAKRAHSETDIGQNAVSVSYAAVELGKKIFDDFKGKQVLILGAGKMGELTAKHLHSNGAEQVTVINRTREKAAELAKRFLGVDRPYNELTEAIVEADILISSTGATGYVVTSDMVSHALKKRKGRPLFMVDIAVPRDLDPALASHDDVYLYDIDDLQNIVQTNLEERRTEAEKIELLIEEELVEFKQWLNTLGVVPIITALRTKALTVQGETMESIERKLPNLTEREKKVLRKHTKSIVNQLLRDPITRIKELANAPEREEALDLFTKIFALEEELAEQEKQEKVKQAEQEWLAKKRPITCMEKQSHVMVKS.

Residues 49–52, S109, 114–116, and Q120 each bind substrate; these read TCNR and ETQ. C50 serves as the catalytic Nucleophile. NADP(+) is bound at residue 189–194; sequence GAGKMG.

Belongs to the glutamyl-tRNA reductase family. As to quaternary structure, homodimer.

The catalysed reaction is (S)-4-amino-5-oxopentanoate + tRNA(Glu) + NADP(+) = L-glutamyl-tRNA(Glu) + NADPH + H(+). It participates in porphyrin-containing compound metabolism; protoporphyrin-IX biosynthesis; 5-aminolevulinate from L-glutamyl-tRNA(Glu): step 1/2. Catalyzes the NADPH-dependent reduction of glutamyl-tRNA(Glu) to glutamate 1-semialdehyde (GSA). The protein is Glutamyl-tRNA reductase of Halalkalibacterium halodurans (strain ATCC BAA-125 / DSM 18197 / FERM 7344 / JCM 9153 / C-125) (Bacillus halodurans).